A 495-amino-acid chain; its full sequence is MPSSTSPDEEDGLETCVLKVFDLDLKESNLVNPSNSLKAELDGSTKKKYSFAKKKAFALLVKTKQVPAPSYEFKGKRWRCCQQLFADQISIHRHVATQHAEDVYQQTASLLKQLTAALSASQSLTPTDKRSSPKDCLTPSQEVSAWLPDVSHVSPQELRSGQGDEEGEVLLYYCYCDLEDPHWVCAWQTALCHHLHLTGKIRIATEGINGTVGGSKVATRLYVEVMLSCPLFKDYLSEDDFKSSKGGSHCFPELRVGVFEEIVPMGISPSQVSYKKPGIHLSPGEFHKEIEKLLSQSSEEQGNTIILDCRNFYESKIGRFQGCLAPDIRKFSYFPSYVDKNLDIFRQKRVLMYCTGGIRCERGSAYLRAKGVCKEVFQLKGGIHKYLEEFPDGFYKGKLFVFDERFALAYNSSVVSECSYCGAPWDQYKLCSTPQCRQLVLTCSACQGQGFTACCVTCQDKGGKQASGPSQDSFKEECECTARRPRIPQEQQAQS.

Position 268 is a phosphoserine (serine 268). Positions 300-395 (EQGNTIILDC…YLEEFPDGFY (96 aa)) constitute a Rhodanese domain. Residue cysteine 354 is the Cysteine persulfide intermediate of the active site.

The polypeptide is Thiosulfate sulfurtransferase/rhodanese-like domain-containing protein 2 (Tstd2) (Mus musculus (Mouse)).